A 445-amino-acid chain; its full sequence is Fatty acid desaturase 3 (445 aa).

The interval 1–21 is disordered; sequence MGGVGEPGPREGPAQPGAPLP. At 1–133 the chain is on the cytoplasmic side; the sequence is MGGVGEPGPR…DMKLFDASPT (133 aa). In terms of domain architecture, Cytochrome b5 heme-binding spans 20-97; that stretch reads LPTFCWEQIR…LQPLLIGELA (78 aa). Residues 134-154 form a helical membrane-spanning segment; the sequence is FFAFLLGHILAMEVLAWLLIY. The Lumenal segment spans residues 155–159; sequence LLGPG. The chain crosses the membrane as a helical span at residues 160-180; that stretch reads WVPSALAAFILAISQAQSWCL. Over 181–263 the chain is Cytoplasmic; it reads QHDLGHASIF…KRRYLPYNQQ (83 aa). Positions 182-186 match the Histidine box-1 motif; that stretch reads HDLGH. The Histidine box-2 motif lies at 219 to 223; it reads HFQHH. A helical transmembrane segment spans residues 264–284; sequence HLYFFLIGPPLLTLVNFEVEN. At 285 to 306 the chain is on the lumenal side; it reads LAYMLVCMQWADLLWAASFYAR. A helical membrane pass occupies residues 307-327; that stretch reads FFLSYLPFYGVPGVLLFFVAV. Residues 328-445 lie on the Cytoplasmic side of the membrane; sequence RVLESHWFVW…DIWLDAYLHQ (118 aa). The short motif at 383–387 is the Histidine box-3 element; the sequence is QIEHH.

Belongs to the fatty acid desaturase type 1 family. As to expression, highly expressed in various organs and tissues including liver, kidney, brain, lung, pancreas, testis, ovary and skeletal muscle (at protein level).

The protein resides in the endoplasmic reticulum membrane. The catalysed reaction is an N-acylsphing-4-enine + 2 Fe(II)-[cytochrome b5] + O2 + 2 H(+) = an N-acyl-sphinga-4E,14Z-dienine + 2 Fe(III)-[cytochrome b5] + 2 H2O. It carries out the reaction N-(hexanoyl)sphing-4-enine + 2 Fe(II)-[cytochrome b5] + O2 + 2 H(+) = N-hexanoyl-sphinga-4E,14Z-dienine + 2 Fe(III)-[cytochrome b5] + 2 H2O. The enzyme catalyses sphing-4-enine + 2 Fe(II)-[cytochrome b5] + O2 + 2 H(+) = sphinga-4E,14Z-dienine + 2 Fe(III)-[cytochrome b5] + 2 H2O. It catalyses the reaction (11E)-octadecenoyl-CoA + 2 Fe(II)-[cytochrome b5] + O2 + 2 H(+) = (11E,13Z)-octadecadienoyl-CoA + 2 Fe(III)-[cytochrome b5] + 2 H2O. The catalysed reaction is N-acyl-1-deoxysphinganine + 2 Fe(II)-[cytochrome b5] + O2 + 2 H(+) = N-acyl-1-deoxysphing-14Z-enine + 2 Fe(III)-[cytochrome b5] + 2 H2O. It carries out the reaction an N-acylsphinganine + 2 Fe(II)-[cytochrome b5] + O2 + 2 H(+) = an N-acylsphing-14Z-enine + 2 Fe(III)-[cytochrome b5] + 2 H2O. It participates in lipid metabolism; sphingolipid metabolism. The protein operates within lipid metabolism; polyunsaturated fatty acid biosynthesis. Its function is as follows. Mammals have different sphingoid bases that differ in their length and/or pattern of desaturation and hydroxyl groups. The predominant sphingoid base that comprises mammalian ceramides is sphing-4-enine (sphingosine or SPH) which has a trans (E) desaturation at carbon 4. FADS3 is a desaturase that introduces a cis (Z) double bond between carbon 14 and carbon 15 of the sphingoid base (also known as long chain base, LCB), producing LCBs such as sphinga-4,14-dienine (SPD, d18:2(4E,14Z)) from SPH. Prefers SPH-containing ceramides (N-acylsphing-4-enines) as substrates. Capable of metabolizing also the SPH in its free form. SPD ceramides occur widely in mammalian tissues and cells. Due to their unusual structure containing a cis double bond, SPD ceramides may have an opposite, negative role in lipid microdomain formation relative to conventional ceramides. Could be involved in the detoxification of 1-deoxy sphingolipids, by desaturating the cytotoxic 1-deoxysphinganine (1-deoxySA, m18:0), produced under pathological conditions, to 1-deoxysphingenine (1-deoxysphingosine, 1-deoxySO, m18:1). Although prefers SPH-containing ceramides (N-acylsphing-4-enines) as substrates, it also exhibits activity toward dihydrosphingosine-containing CERs (N-acylsphinganines) and produces 14Z-SPH-containing sphingolipids,which can be found in patients with DEGS1 mutations. Its desaturase mechanism involves an electron transfer facilitated by cytochrome b5. FADS3 also acts as a methyl-end fatty acyl coenzyme A (CoA) desaturase that introduces a cis double bond between the preexisting double bond and the terminal methyl group of the fatty acyl chain. Desaturates (11E)-octadecenoate (trans-vaccenoate, the predominant trans fatty acid in human milk) at carbon 13 to generate (11E,13Z)-octadecadienoate (also known as conjugated linoleic acid 11E,13Z-CLA). In Homo sapiens (Human), this protein is Fatty acid desaturase 3.